Reading from the N-terminus, the 560-residue chain is DNA ligase B (560 aa).

Catalysis depends on Lys-124, which acts as the N6-AMP-lysine intermediate.

The protein belongs to the NAD-dependent DNA ligase family. LigB subfamily.

The enzyme catalyses NAD(+) + (deoxyribonucleotide)n-3'-hydroxyl + 5'-phospho-(deoxyribonucleotide)m = (deoxyribonucleotide)n+m + AMP + beta-nicotinamide D-nucleotide.. Functionally, catalyzes the formation of phosphodiester linkages between 5'-phosphoryl and 3'-hydroxyl groups in double-stranded DNA using NAD as a coenzyme and as the energy source for the reaction. This Escherichia coli O7:K1 (strain IAI39 / ExPEC) protein is DNA ligase B.